A 602-amino-acid polypeptide reads, in one-letter code: Elongation factor 4 (602 aa).

The tr-type G domain occupies 7-189 (SKIRNFCIIA…AIVRRVPPPQ (183 aa)). GTP is bound by residues 19 to 24 (DHGKST) and 136 to 139 (NKVD).

Belongs to the TRAFAC class translation factor GTPase superfamily. Classic translation factor GTPase family. LepA subfamily.

The protein resides in the cell inner membrane. It carries out the reaction GTP + H2O = GDP + phosphate + H(+). Its function is as follows. Required for accurate and efficient protein synthesis under certain stress conditions. May act as a fidelity factor of the translation reaction, by catalyzing a one-codon backward translocation of tRNAs on improperly translocated ribosomes. Back-translocation proceeds from a post-translocation (POST) complex to a pre-translocation (PRE) complex, thus giving elongation factor G a second chance to translocate the tRNAs correctly. Binds to ribosomes in a GTP-dependent manner. This is Elongation factor 4 from Prochlorococcus marinus (strain MIT 9301).